Consider the following 145-residue polypeptide: Basic leucine zipper 1 (145 aa).

The span at 1 to 11 (MANAEKTSSGS) shows a compositional bias: polar residues. The interval 1 to 39 (MANAEKTSSGSDIDEKKRKRKLSNRESARRSRLKKQKLM) is disordered. Residues 14–77 (DEKKRKRKLS…DSVETENAGL (64 aa)) form the bZIP domain. The segment at 16–37 (KKRKRKLSNRESARRSRLKKQK) is basic motif. Residues 46-53 (ISSLERRI) form a leucine-zipper region.

This sequence belongs to the bZIP family. Interacts with ZFP7, BZIP4, BZIP9, BZIP10, BZIP11, BZIP25, BZIP42, BZIP44, BZIP53, BZIP58 and BZIP63. Expressed in both shoots, including young leaves, stipulae and trichomes (except in cotyledons and hypocotyl), and roots, including vascular tissues (e.g. in both the phloem and the xylem). Present in seeds and pollen. Restricted to vasculatures and roots in the presence of sucrose or glucose.

It is found in the nucleus. Functionally, transcription factor that binds to the C-box-like motif (5'-TGCTGACGTCA-3') and G-box-like motif (5'-CCACGTGGCC-3'), ABRE elements, of gene promoters involved in sugar signaling. Activated by low energy stress both at transcriptional and post-transcriptional mechanisms. Promotes dark-induced senescence and participates in the transcriptional reprogramming of amino acid metabolism during the dark-induced starvation response. Transcription activator of the mannan synthase CSLA9. Recognizes and binds to DNA-specific sequence of CSLA9 promoter. This Arabidopsis thaliana (Mouse-ear cress) protein is Basic leucine zipper 1 (BZIP1).